The chain runs to 386 residues: Methionine aminopeptidase 1 (386 aa).

At alanine 2 the chain carries N-acetylalanine. A C6H2-type zinc finger spans residues 6–59; the sequence is TRVCETDGCSSEAKLQCPTCIKLGIQGSYFCSQECFKGSWATHKLLHKKAKDEK. Zn(2+)-binding residues include cysteine 9, cysteine 14, cysteine 22, cysteine 25, cysteine 36, cysteine 40, histidine 48, histidine 52, and lysine 53. Position 203 (histidine 203) interacts with a protein. Aspartate 220, aspartate 231, and histidine 294 together coordinate Zn(2+). Histidine 301 is a binding site for a protein. Residues glutamate 327 and glutamate 358 each contribute to the Zn(2+) site.

The protein belongs to the peptidase M24A family. Methionine aminopeptidase type 1 subfamily. As to quaternary structure, associates with the 60S ribosomal subunit of the 80S translational complex. Zn(2+) serves as cofactor. Requires Co(2+) as cofactor. The cofactor is Mn(2+). It depends on Fe(2+) as a cofactor.

The protein resides in the cytoplasm. The enzyme catalyses Release of N-terminal amino acids, preferentially methionine, from peptides and arylamides.. In terms of biological role, cotranslationally removes the N-terminal methionine from nascent proteins. The N-terminal methionine is often cleaved when the second residue in the primary sequence is small and uncharged (Met-Ala-, Cys, Gly, Pro, Ser, Thr, or Val). This chain is Methionine aminopeptidase 1 (Metap1), found in Mus musculus (Mouse).